A 341-amino-acid polypeptide reads, in one-letter code: Aspartate carbamoyltransferase catalytic subunit (341 aa).

Carbamoyl phosphate is bound by residues arginine 89 and threonine 90. L-aspartate is bound at residue lysine 117. Arginine 139, histidine 169, and glutamine 172 together coordinate carbamoyl phosphate. Residues arginine 202 and arginine 257 each contribute to the L-aspartate site. 2 residues coordinate carbamoyl phosphate: glycine 298 and proline 299.

This sequence belongs to the aspartate/ornithine carbamoyltransferase superfamily. ATCase family. As to quaternary structure, heterododecamer (2C3:3R2) of six catalytic PyrB chains organized as two trimers (C3), and six regulatory PyrI chains organized as three dimers (R2).

It catalyses the reaction carbamoyl phosphate + L-aspartate = N-carbamoyl-L-aspartate + phosphate + H(+). The protein operates within pyrimidine metabolism; UMP biosynthesis via de novo pathway; (S)-dihydroorotate from bicarbonate: step 2/3. Functionally, catalyzes the condensation of carbamoyl phosphate and aspartate to form carbamoyl aspartate and inorganic phosphate, the committed step in the de novo pyrimidine nucleotide biosynthesis pathway. The sequence is that of Aspartate carbamoyltransferase catalytic subunit from Paraburkholderia phytofirmans (strain DSM 17436 / LMG 22146 / PsJN) (Burkholderia phytofirmans).